Reading from the N-terminus, the 21-residue chain is MAAACRCLSLLLLSTCVALLL.

Belongs to the NPY family.

The polypeptide is Putative pancreatic polypeptide 2 (PPY2P) (Homo sapiens (Human)).